Reading from the N-terminus, the 457-residue chain is Siroheme synthase (457 aa).

The interval 1-204 (MDHLPIFCQL…NDQKAITETT (204 aa)) is precorrin-2 dehydrogenase /sirohydrochlorin ferrochelatase. NAD(+) contacts are provided by residues 22-23 (DV) and 43-44 (LA). At Ser-128 the chain carries Phosphoserine. The interval 216-457 (GEVVLVGAGP…RDKLNWFSNH (242 aa)) is uroporphyrinogen-III C-methyltransferase. Pro-225 serves as a coordination point for S-adenosyl-L-methionine. Residue Asp-248 is the Proton acceptor of the active site. Lys-270 functions as the Proton donor in the catalytic mechanism. S-adenosyl-L-methionine contacts are provided by residues 301–303 (GGD), Ile-306, 331–332 (TA), Met-382, and Gly-411.

This sequence in the N-terminal section; belongs to the precorrin-2 dehydrogenase / sirohydrochlorin ferrochelatase family. The protein in the C-terminal section; belongs to the precorrin methyltransferase family.

The enzyme catalyses uroporphyrinogen III + 2 S-adenosyl-L-methionine = precorrin-2 + 2 S-adenosyl-L-homocysteine + H(+). It catalyses the reaction precorrin-2 + NAD(+) = sirohydrochlorin + NADH + 2 H(+). It carries out the reaction siroheme + 2 H(+) = sirohydrochlorin + Fe(2+). The protein operates within cofactor biosynthesis; adenosylcobalamin biosynthesis; precorrin-2 from uroporphyrinogen III: step 1/1. Its pathway is cofactor biosynthesis; adenosylcobalamin biosynthesis; sirohydrochlorin from precorrin-2: step 1/1. It functions in the pathway porphyrin-containing compound metabolism; siroheme biosynthesis; precorrin-2 from uroporphyrinogen III: step 1/1. It participates in porphyrin-containing compound metabolism; siroheme biosynthesis; siroheme from sirohydrochlorin: step 1/1. The protein operates within porphyrin-containing compound metabolism; siroheme biosynthesis; sirohydrochlorin from precorrin-2: step 1/1. In terms of biological role, multifunctional enzyme that catalyzes the SAM-dependent methylations of uroporphyrinogen III at position C-2 and C-7 to form precorrin-2 via precorrin-1. Then it catalyzes the NAD-dependent ring dehydrogenation of precorrin-2 to yield sirohydrochlorin. Finally, it catalyzes the ferrochelation of sirohydrochlorin to yield siroheme. This Shigella dysenteriae serotype 1 (strain Sd197) protein is Siroheme synthase.